Reading from the N-terminus, the 357-residue chain is DNA integrity scanning protein DisA (357 aa).

The 139-residue stretch at 8–146 folds into the DAC domain; the sequence is VKSMINILQL…GNLRYTLKDI (139 aa). Residues G75, L93, and 106-110 contribute to the ATP site; that span reads MRHRT.

The protein belongs to the DisA family. As to quaternary structure, homooctamer. It depends on Mg(2+) as a cofactor.

It carries out the reaction 2 ATP = 3',3'-c-di-AMP + 2 diphosphate. Functionally, participates in a DNA-damage check-point that is active prior to asymmetric division when DNA is damaged. DisA forms globular foci that rapidly scan along the chromosomes during sporulation, searching for lesions. When a lesion is present, DisA pauses at the lesion site. This triggers a cellular response that culminates in a temporary block in sporulation initiation. In terms of biological role, also has diadenylate cyclase activity, catalyzing the condensation of 2 ATP molecules into cyclic di-AMP (c-di-AMP). c-di-AMP acts as a signaling molecule that couples DNA integrity with progression of sporulation. The rise in c-di-AMP level generated by DisA while scanning the chromosome, operates as a positive signal that advances sporulation; upon encountering a lesion, the DisA focus arrests at the damaged site and halts c-di-AMP synthesis. The polypeptide is DNA integrity scanning protein DisA (Bacillus cereus (strain ATCC 14579 / DSM 31 / CCUG 7414 / JCM 2152 / NBRC 15305 / NCIMB 9373 / NCTC 2599 / NRRL B-3711)).